Here is a 171-residue protein sequence, read N- to C-terminus: uncharacterized protein (171 aa).

This sequence to A.aeolicus aq_616.

This is an uncharacterized protein from Aquifex aeolicus (strain VF5).